Reading from the N-terminus, the 367-residue chain is MSISSKIRPTPRKPSRMATDHSFKMKNFYADPFAISSISLAIVSWVIAIGGSISSASTNESFPRFTWWGIVYQFLIICSLMLFYCFDLVDHYRIFITTSIAVAFVYNTNSATNLVYADGPKKAAASAGVILLSIINLVWILYYGGDNASPTNRWIDSFSIKGIRPSPLENSLHRARRRGNRNTTPYQNNVYNDAIRDSGYATQFDGYPQQQPSHTNYVSSTALAGFENTQPNTSEAVNLHLNTLQQRINSASNAKETNDNSNNQTNTNIGNTFDTDFSNGNTETTMGDTLGLYSDIGDDNFIYKAKALYPYDADDDDAYEISFEQNEILQVSDIEGRWWKARRANGETGIIPSNYVQLIDGPEEMHR.

Residues 1-32 lie on the Cytoplasmic side of the membrane; the sequence is MSISSKIRPTPRKPSRMATDHSFKMKNFYADP. A helical membrane pass occupies residues 33–53; that stretch reads FAISSISLAIVSWVIAIGGSI. Topologically, residues 54 to 65 are extracellular; that stretch reads SSASTNESFPRF. N-linked (GlcNAc...) asparagine glycosylation occurs at N59. A helical membrane pass occupies residues 66 to 86; that stretch reads TWWGIVYQFLIICSLMLFYCF. At 87–93 the chain is on the cytoplasmic side; it reads DLVDHYR. Residues 94–114 traverse the membrane as a helical segment; it reads IFITTSIAVAFVYNTNSATNL. The Extracellular portion of the chain corresponds to 115–122; the sequence is VYADGPKK. A helical transmembrane segment spans residues 123 to 143; it reads AAASAGVILLSIINLVWILYY. Residues 144–367 lie on the Cytoplasmic side of the membrane; that stretch reads GGDNASPTNR…LIDGPEEMHR (224 aa). S166 bears the Phosphoserine mark. The disordered stretch occupies residues 252–276; the sequence is SNAKETNDNSNNQTNTNIGNTFDTD. The segment covering 259–272 has biased composition (low complexity); sequence DNSNNQTNTNIGNT. Positions 300-361 constitute an SH3 domain; sequence NFIYKAKALY…PSNYVQLIDG (62 aa).

It belongs to the SHO1 family. Forms homooligomers. Interacts (via the SH3 domain) with PBS2. Interacts with FUS1, STE11, STE50 and RNA polymerase II.

The protein resides in the cell membrane. Its subcellular location is the bud. It is found in the bud neck. The protein localises to the cell projection. Plasma membrane osmosensor that activates the high osmolarity glycerol (HOG) MAPK signaling pathway in response to high osmolarity. Detects changes in external osmolarity and activates PBS2 through the stimulation of STE11 and targets PBS2 to the plasma membrane. PBS2 activation leads to changes in glycerol production that helps to balance the intracellular and external osmotic pressures. Activates also HOG1 in response to heat stress and mediates resistance to oxidative stress. Involved in the regulation of the mating pathway. May be a receptor that feeds into the pseudohyphal growth pathway. This chain is High osmolarity signaling protein SHO1 (SHO1), found in Saccharomyces cerevisiae (strain RM11-1a) (Baker's yeast).